The chain runs to 104 residues: Secretoglobin family 3A member 1 (104 aa).

Positions 1-20 are cleaved as a signal peptide; the sequence is MKLAALLGLCVALSCSSAAA.

The protein belongs to the secretoglobin family. UGRP subfamily. Homodimer; disulfide-linked. As to expression, highly expressed in lung and prostate. Also found in mammary gland, spleen, pancreas, testis and liver. Detected throughout the airway epithelium in lung, with highest expression in large airways. Found in lung submucosal glands where it localizes to acinar and ductile cells. Not detected in respiratory bronchioles, alveolar ducts or alveolar epithelium. In mammary gland, specifically localizes to luminal epithelial cells.

The protein resides in the secreted. Secreted cytokine-like protein. Inhibits cell growth in vitro. The polypeptide is Secretoglobin family 3A member 1 (SCGB3A1) (Homo sapiens (Human)).